A 186-amino-acid polypeptide reads, in one-letter code: ADP-ribosylation factor-like protein 8B (186 aa).

An intramembrane region (note=Mediates targeting to membranes) is located at residues 1-19; the sequence is MLALISRLLDWFRSLFWKE. GTP contacts are provided by residues 29–35, 71–75, and 130–133; these read QYSGKTT, DIGGQ, and NKRD. A Glycyl lysine isopeptide (Lys-Gly) (interchain with G-Cter in ubiquitin) cross-link involves residue Lys-141.

This sequence belongs to the small GTPase superfamily. Arf family. As to quaternary structure, interacts with tubulin. Interacts with BORCS5; recruits ARL8B to lysosomes. Interacts with VPS41; the interaction mediates the recruitment of the HOPS complex to lysosomes. Interacts (GTP-bound form) with PLEKHM2 (via RUN domain); the interaction is required to recruit the motor protein kinesin-1 on lysosomes. Interacts (GTP-bound form) with PLEKHM1 (via RUN domain); the interaction is required for PLEKHM1 localization to lysosomes and for ARL8B function in delivery and degradation of endocytic and autophagic cargo in lysosomes. PLEKHM1 and PLEKHM2 compete for interaction with ARL8B. Interacts (GTP-bound form) with RUFY1; the interaction is required for RUFY1 endosomal location. When GTP-bound, interacts with RUFY3 and RUFY4, but not with RUFY1, nor RUFY2. Ubiquitinated at Lys-141 by RNF167, leading to its degradation.

It is found in the late endosome membrane. Its subcellular location is the lysosome membrane. The protein resides in the cytoplasm. It localises to the cytoskeleton. The protein localises to the spindle. It is found in the cell projection. Its subcellular location is the axon. The protein resides in the synapse. It localises to the cytolytic granule membrane. The protein localises to the early endosome membrane. It catalyses the reaction GTP + H2O = GDP + phosphate + H(+). In terms of biological role, small GTPase which cycles between active GTP-bound and inactive GDP-bound states. In its active state, binds to a variety of effector proteins playing a key role in the regulation of lysosomal positioning which is important for nutrient sensing, natural killer cell-mediated cytotoxicity and antigen presentation. Along with its effectors, orchestrates lysosomal transport and fusion. Localizes specifically to lysosomal membranes and mediates anterograde lysosomal motility by recruiting PLEKHM2, which in turn recruits the motor protein kinesin-1 on lysosomes. Required for lysosomal and cytolytic granule exocytosis. Critical factor involved in NK cell-mediated cytotoxicity. Drives the polarization of cytolytic granules and microtubule-organizing centers (MTOCs) toward the immune synapse between effector NK lymphocytes and target cells. In neurons, mediates the anterograde axonal long-range transport of presynaptic lysosome-related vesicles required for presynaptic biogenesis and synaptic function. Also acts as a regulator of endosome to lysosome trafficking pathways of special significance for host defense. Recruits RUFY1 onto early endosomes regulating endosomes to trans-Golgi network proteins retrieval. Regulates cargo trafficking to lysosomes by binding to PLEKHM1 and recruiting the HOPS subunit VPS41, resulting in functional assembly of the HOPS complex on lysosomal membranes. Plays an important role in cargo delivery to lysosomes for antigen presentation and microbial killing. Directs the intersection of CD1d with lipid antigens in lysosomes, and plays a role in intersecting phagosomes with lysosomes to generate phagolysosomes that kill microbes. Involved in the process of MHC II presentation. Regulates the delivery of antigens to lysosomes and the formation of MHC II-peptide complexes through the recruitment of the HOPS complex to lysosomes allowing the fusion of late endosomes to lysosomes. May play a role in chromosome segregation. The sequence is that of ADP-ribosylation factor-like protein 8B (ARL8B) from Bos taurus (Bovine).